The primary structure comprises 321 residues: Acetylglutamate kinase (321 aa).

Substrate contacts are provided by residues 88–89 (GG), R110, and N216.

It belongs to the acetylglutamate kinase family. ArgB subfamily.

The protein resides in the cytoplasm. It carries out the reaction N-acetyl-L-glutamate + ATP = N-acetyl-L-glutamyl 5-phosphate + ADP. It functions in the pathway amino-acid biosynthesis; L-arginine biosynthesis; N(2)-acetyl-L-ornithine from L-glutamate: step 2/4. Catalyzes the ATP-dependent phosphorylation of N-acetyl-L-glutamate. The protein is Acetylglutamate kinase of Ehrlichia chaffeensis (strain ATCC CRL-10679 / Arkansas).